Here is a 294-residue protein sequence, read N- to C-terminus: Gap junction delta-3 protein (294 aa).

Over 1–24 (MGEWAFLGSLLDAVQLQSPLVGRL) the chain is Cytoplasmic. The helical transmembrane segment at 25 to 45 (WLVVMLIFRILVLATVGGAVF) threads the bilayer. The Extracellular portion of the chain corresponds to 46 to 76 (EDEQEEFVCNTLQPGCRQTCYDRAFPVSHYR). The chain crosses the membrane as a helical span at residues 77–97 (FWLFHILLLSAPPVLFVVYSM). At 98–136 (HRAGKEAGGAEAAAQCAPGLPEAQCAPCALRARRARRCY) the chain is on the cytoplasmic side. The helical transmembrane segment at 137 to 157 (LLSVALRLLAELTFLGGQALL) threads the bilayer. At 158–188 (YGFRVAPHFACAGPPCPHTVDCFVSRPTEKT) the chain is on the extracellular side. A helical membrane pass occupies residues 189–209 (VFVLFYFAVGLLSALLSVAEL). The Cytoplasmic segment spans residues 210–294 (GHLLWKGRPR…PATGRRDLAI (85 aa)). The segment at 233–294 (EAQKLLPPPP…PATGRRDLAI (62 aa)) is disordered. Residues 238-250 (LPPPPPPPPPPAL) are compositionally biased toward pro residues.

Belongs to the connexin family. Delta-type subfamily. A connexon is composed of a hexamer of connexins. Interacts with TJP1. In terms of tissue distribution, expressed in vascular smooth muscle cells. Found in heart, colon, and artery (at protein level). Found in cerebral cortex, heart, liver, lung, kidney, spleen and testis.

The protein resides in the cell membrane. Its subcellular location is the cell junction. It is found in the gap junction. In terms of biological role, one gap junction consists of a cluster of closely packed pairs of transmembrane channels, the connexons, through which materials of low MW diffuse from one cell to a neighboring cell. The chain is Gap junction delta-3 protein (GJD3) from Homo sapiens (Human).